The chain runs to 875 residues: Protein HIR2 (875 aa).

WD repeat units follow at residues 10–47, 118–158, 163–201, 237–277, 278–316, and 320–359; these read IHNE…DTAF, KSPS…KLSE, KASK…THKL, PNNA…PAFY, EKPN…PLFN, and VSST…LGVA. Residues 398 to 473 are disordered; the sequence is ESASAAPIPN…IAPGSKKQKK (76 aa). The span at 424 to 446 shows a compositional bias: polar residues; that stretch reads ANNQTNGIKTIQSTSMEFNTPSY. WD repeat units follow at residues 546–587 and 589–626; these read LFQD…LMAP and VLGV…LAFP. The residue at position 713 (Ser713) is a Phosphoserine.

It belongs to the WD repeat HIR1 family. In terms of assembly, component of the HIR complex, composed of HIR1, HIR2, HIR3 and HPC2. This complex may consist of one copy of HIR1 and HIR3 and two copies of HIR2 and HPC2. The HIR complex interacts with ASF1. Interacts with SNF2. Interacts with SNF5. Interacts with SWI3. Interacts with RTT106.

The protein localises to the nucleus. It localises to the chromosome. Component of the HIR complex, which cooperates with ASF1 to promote replication-independent chromatin assembly. The HIR complex is also required for the periodic repression of three of the four histone gene loci during the cell cycle as well as for autogenous regulation of the HTA1-HTB1 locus by H2A and H2B. DNA-binding by the HIR complex may repress transcription by inhibiting nucleosome remodeling by the SWI/SNF complex. The HIR complex may also be required for transcriptional silencing of centromeric, telomeric and mating-type loci in the absence of CAF-1. This chain is Protein HIR2 (HIR2), found in Saccharomyces cerevisiae (strain ATCC 204508 / S288c) (Baker's yeast).